The chain runs to 410 residues: MELPSGPGPERLFDSHRLPGDCFLLLVLLLYAPVGFCLLVLRLFLGIHVFLVSCALPDSVLRRFVVRTMCAVLGLVARQEDSGLRDHSVRVLISNHVTPFDHNIVNLLTTCSTPLLNSPPSFVCWSRGFMEMNGRGELVESLKRFCASTRLPPTPLLLFPEEEATNGREGLLRFSSWPFSIQDVVQPLTLQVQRPLVSVTVSDASWVSELLWSLFVPFTVYQVRWLRPVHRQLGEANEEFALRVQQLVAKELGQTGTRLTPADKAEHMKRQRHPRLRPQSAQSSFPPSPGPSPDVQLATLAQRVKEVLPHVPLGVIQRDLAKTGCVDLTITNLLEGAVAFMPEDITKGTQSLPTASASKFPSSGPVTPQPTALTFAKSSWARQESLQERKQALYEYARRRFTERRAQEAD.

The residue at position 1 (M1) is an N-acetylmethionine. Over 1–20 (MELPSGPGPERLFDSHRLPG) the chain is Cytoplasmic. The residue at position 5 (S5) is a Phosphoserine. Residues 21–41 (DCFLLLVLLLYAPVGFCLLVL) lie within the membrane without spanning it. The Cytoplasmic segment spans residues 42 to 410 (RLFLGIHVFL…FTERRAQEAD (369 aa)). Residues 255–295 (TGTRLTPADKAEHMKRQRHPRLRPQSAQSSFPPSPGPSPDV) form a disordered region. Residues S288 and S292 each carry the phosphoserine modification. The 43-residue stretch at 296-338 (QLATLAQRVKEVLPHVPLGVIQRDLAKTGCVDLTITNLLEGAV) folds into the CUE domain. The disordered stretch occupies residues 350 to 369 (QSLPTASASKFPSSGPVTPQ). Phosphoserine is present on S363. Residue T367 is modified to Phosphothreonine.

It belongs to the AUP1 family. In terms of assembly, identified in a complex that contains SEL1L, OS9, FAF2/UBXD8, UBE2J1/UBC6E and AUP1. Interacts with the cytoplasmic tail of ITGA2B, ITGA1, ITGA2, ITGA5, ITGAV and ITGAM. Interacts (via C-terminus) with ubiquitin-conjugating enzyme UBE2G2; the interaction recruits UBE2G2 to lipid droplets. Interacts with ubiquitin ligases AMFR/gp78 and RNF139/TRC8; this promotes interaction of UBE2G2 with AMFR and RNF139. Interacts with apolipoprotein APOB. As to quaternary structure, (Microbial infection) Interacts with Dengue virus NS4A; the interaction occurs in the presence of Dengue virus NS4B and induces lipophagy which facilitates production of virus progeny. Monoubiquitinated and diubiquitinated. Post-translationally, (Microbial infection) Not ubiquitinated following Dengue virus infection. In terms of tissue distribution, detected in blood platelets and leukocytes (at protein level). Ubiquitous. Highly expressed in placenta, liver, kidney, skeletal muscle, heart and brain.

It is found in the endoplasmic reticulum membrane. The protein localises to the lipid droplet. The protein resides in the cytoplasmic vesicle. Its subcellular location is the autophagosome. In terms of biological role, plays a role in the translocation of terminally misfolded proteins from the endoplasmic reticulum lumen to the cytoplasm and their degradation by the proteasome. Plays a role in lipid droplet formation. Induces lipid droplet clustering. Recruits ubiquitin-conjugating enzyme UBE2G2 to lipid droplets which facilitates its interaction with ubiquitin ligases AMFR/gp78 and RNF139/TRC8, leading to sterol-induced ubiquitination of HMGCR and its subsequent proteasomal degradation. Also required for the degradation of INSIG1, SREBF1 and SREBF2. Plays a role in regulating assembly and secretion of very low density lipoprotein particles and stability of apolipoprotein APOB. Its function is as follows. (Microbial infection) Following Dengue virus infection, required for induction of lipophagy which facilitates production of virus progeny particles. This chain is Lipid droplet-regulating VLDL assembly factor AUP1, found in Homo sapiens (Human).